We begin with the raw amino-acid sequence, 326 residues long: DNA repair protein XRCC4 (326 aa).

The interaction with IFFO1 stretch occupies residues 1–212 (MERKVSRIYL…QLEESTKPER (212 aa)). Position 53 is a phosphoserine; by PRKDC (Ser-53). Coiled coils occupy residues 131-165 (LDTI…FEKC) and 185-209 (NEKK…ESTK). The interaction with LIG4 stretch occupies residues 180-211 (FILVLNEKKTKIRSLHKLLNEVQQLEESTKPE). A Phosphoserine; by PRKDC modification is found at Ser-193. Residues 203-326 (QLEESTKPER…RNSSPEDLFD (124 aa)) are disordered. Over residues 206 to 226 (ESTKPERENPCSDKTPEEHGL) the composition is skewed to basic and acidic residues. Position 227 is a phosphotyrosine (Tyr-227). Phosphoserine is present on Ser-230. Thr-231 bears the Phosphothreonine mark. Ser-235 is subject to Phosphoserine. The residue at position 244 (Thr-244) is a Phosphothreonine. Ser-250 is subject to Phosphoserine. Ser-254 carries the post-translational modification Phosphoserine; by PRKDC. Positions 264-269 (RKRRHR) match the Nuclear localization signal motif. Lys-290 participates in a covalent cross-link: Glycyl lysine isopeptide (Lys-Gly) (interchain with G-Cter in ubiquitin). The residue at position 295 (Ser-295) is a Phosphoserine; by PRKDC. Phosphoserine is present on Ser-296. Residues Ser-307 and Ser-312 each carry the phosphoserine; by PRKDC modification. Positions 307–326 (SAENMSLETLRNSSPEDLFD) are enriched in polar residues. A Phosphothreonine; by PRKDC modification is found at Thr-315. A phosphoserine; by PRKDC mark is found at Ser-319 and Ser-320.

Belongs to the XRCC4-XLF family. XRCC4 subfamily. Homodimer and homotetramer in solution. Interacts with NHEJ1/XLF; the interaction is direct and is mediated via a head-to-head interaction between N-terminal head regions. Interacts with LIG4; the LIG4-XRCC4 subcomplex has a 1:2 stoichiometry and XRCC4 is required for LIG4 stability. Component of the core long-range non-homologous end joining (NHEJ) complex (also named DNA-PK complex) composed of PRKDC, LIG4, XRCC4, XRCC6/Ku70, XRCC5/Ku86 and NHEJ1/XLF. Additional component of the NHEJ complex includes PAXX. Following autophosphorylation, PRKDC dissociates from DNA, leading to formation of the short-range NHEJ complex, composed of LIG4, XRCC4, XRCC6/Ku70, XRCC5/Ku86 and NHEJ1/XLF. Interacts with PRKDC; the interaction is direct. Interacts with XRCC6/Ku70; the interaction is direct. Interacts with APTX and APLF. Forms a heterotetramer with IFFO1; the interaction involves LIG4-free XRCC4 and leads to the relocalization of IFFO1 to the sites of DNA damage. Interacts with PNKP; mainly interacts with PNKP when phosphorylated at Thr-231, but is also able to interact at much lower level with PNKP when not unphosphorylated. Interacts with POLL (DNA polymerase lambda). As to quaternary structure, interacts with XKR4; interacts with the processed form of XKR4, which is cleaved by caspase. Phosphorylated by PRKDC at the C-terminus in response to DNA damage; Ser-254 and Ser-312 constitute the main phosphorylation sites. Phosphorylation by PRKDC at the C-terminus of XRCC4 and NHEJ1/XLF are highly redundant and regulate ability of the XRCC4-NHEJ1/XLF subcomplex to bridge DNA. Phosphorylation by PRKDC does not prevent interaction with NHEJ1/XLF but disrupts ability to bridge DNA and promotes detachment from DNA. Phosphorylation at Ser-319 and Ser-320 by PRKDC promotes recognition by the SCF(FBXW7) complex and subsequent ubiquitination via 'Lys-63'-linked ubiquitin. Phosphorylation at Thr-231 by CK2 promotes interaction with PNKP; regulating PNKP activity and localization to DNA damage sites. Phosphorylation by CK2 promotes interaction with APTX. In terms of processing, ubiquitinated at Lys-290 by the SCF(FBXW7) complex via 'Lys-63'-linked ubiquitination, thereby promoting double-strand break repair: the SCF(FBXW7) complex specifically recognizes XRCC4 when phosphorylated at Ser-319 and Ser-320 by PRKDC, and 'Lys-63'-linked ubiquitination facilitates DNA non-homologous end joining (NHEJ) by enhancing association with XRCC5/Ku80 and XRCC6/Ku70. Monoubiquitinated. Post-translationally, undergoes proteolytic processing by caspase-3 (CASP3). This generates the protein XRCC4, C-terminus (XRCC4/C), which translocates to the cytoplasm and activates phospholipid scramblase activity of XKR4, thereby promoting phosphatidylserine exposure on apoptotic cell surface.

It is found in the nucleus. It localises to the chromosome. The protein resides in the cytoplasm. In terms of biological role, DNA non-homologous end joining (NHEJ) core factor, required for double-strand break repair and V(D)J recombination. Acts as a scaffold protein that regulates recruitment of other proteins to DNA double-strand breaks (DSBs). Associates with NHEJ1/XLF to form alternating helical filaments that bridge DNA and act like a bandage, holding together the broken DNA until it is repaired. The XRCC4-NHEJ1/XLF subcomplex binds to the DNA fragments of a DSB in a highly diffusive manner and robustly bridges two independent DNA molecules, holding the broken DNA fragments in close proximity to one other. The mobility of the bridges ensures that the ends remain accessible for further processing by other repair factors. Plays a key role in the NHEJ ligation step of the broken DNA during DSB repair via direct interaction with DNA ligase IV (LIG4): the LIG4-XRCC4 subcomplex reseals the DNA breaks after the gap filling is completed. XRCC4 stabilizes LIG4, regulates its subcellular localization and enhances LIG4's joining activity. Binding of the LIG4-XRCC4 subcomplex to DNA ends is dependent on the assembly of the DNA-dependent protein kinase complex DNA-PK to these DNA ends. Promotes displacement of PNKP from processed strand break termini. Its function is as follows. Acts as an activator of the phospholipid scramblase activity of XKR4. This form, which is generated upon caspase-3 (CASP3) cleavage, translocates into the cytoplasm and interacts with XKR4, thereby promoting phosphatidylserine scramblase activity of XKR4 and leading to phosphatidylserine exposure on apoptotic cell surface. The polypeptide is DNA repair protein XRCC4 (Mus musculus (Mouse)).